Here is a 542-residue protein sequence, read N- to C-terminus: MHGSGHSLTGAPHQIPPPRTQGAATGGQQLSATANQFVDKIDPFHNKRGTSRRLRINNSSRYNVDSAQELVQLALIKDTAANEQPALVIEKLVQCQHVFDFYDPVAQLKCKEIKRAALNELIDHITSTKGAIVETIYPAVIKMVAKNIFRVLPPSENCEFDPEEDEPTLEVSWPHLQLVYELFLRFLESPDFQASIGKKYIDQRFVLKLLDLFDSEDPRERDFLKTVLHRIYGKFLGLRAFIRKHINNMFLRFVYETDSFNGVGELLEILGSIINGFALPLKQEHKVFLVKVLLPLHKPKCLSLYHAQLAYCVVQFIEKDSSLTPQVFEALLKFWPRTCSSKEVMFLGEVEEILDIIEPEQFKKIIDPLFRQLAKCVSSPHFQVAERALYFWNNEYILSLIEDTSSLVMPIMFPALYRISKEHWNQTIVALVYNVLKTFMEMNGKLFDELTSTYKGERLREKQREKDRDAFWKKMEALELNPPAEGKEVTPSLFPEKLTDYLKKDGPNMTPLPVATAGGGDKSPSVVKKSSTGSETTTPAKK.

2 disordered regions span residues 1–28 and 500–542; these read MHGS…TGGQ and DYLK…PAKK. Residues 528–542 are compositionally biased toward polar residues; it reads KKSSTGSETTTPAKK.

It belongs to the phosphatase 2A regulatory subunit B56 family. In terms of assembly, part of a complex consisting of a common heterodimeric core enzyme, composed of catalytic subunit let-92 and constant regulatory subunit paa-1, that associates with a variety of regulatory subunits which confer distinct properties to the holoenzyme. Interacts with akt-1 but not akt-2. Interacts with sgk-1. Interacts with P granule components meg-1, meg-3 and meg-4. As to expression, expressed in pharynx, vulva and spermatheca.

It localises to the cytoplasm. Probable regulatory subunit of serine/threonine-protein phosphatase let-92 which negatively regulates the insulin receptor signaling cascade composed of daf-2, age-1, akt-1, akt-2 and sgk-1 by promoting the dephosphorylation of akt-1 on 'Thr-350'. Negatively regulates several functions controlled by the insulin pathway including dauer formation, lifespan, fat storage and stress resistance. Plays a role in the asymmetric segregation of the P granule components during embryonic cell divisions but does not play an essential role in specifying germ cell fate. Within a PP2A phosphatase complex, acts redundantly with pptr-2, to dephosphorylate P granule components including meg-1 and meg-3 to promote the assembly and accumulation of zygotic P granules in the posterior cytoplasm during zygote polarization, and thus maintain P granule distribution and segregation in early stage embryos following meiosis. In adults, required to promote germ cell proliferation and differentiation when exposed to thermic stress. The sequence is that of Serine/threonine-protein phosphatase 2A regulatory subunit pptr-1 from Caenorhabditis elegans.